Consider the following 364-residue polypeptide: UDP-3-O-acylglucosamine N-acyltransferase (364 aa).

The Proton acceptor role is filled by H267.

It belongs to the transferase hexapeptide repeat family. LpxD subfamily. Homotrimer.

The catalysed reaction is a UDP-3-O-[(3R)-3-hydroxyacyl]-alpha-D-glucosamine + a (3R)-hydroxyacyl-[ACP] = a UDP-2-N,3-O-bis[(3R)-3-hydroxyacyl]-alpha-D-glucosamine + holo-[ACP] + H(+). It functions in the pathway bacterial outer membrane biogenesis; LPS lipid A biosynthesis. Catalyzes the N-acylation of UDP-3-O-acylglucosamine using 3-hydroxyacyl-ACP as the acyl donor. Is involved in the biosynthesis of lipid A, a phosphorylated glycolipid that anchors the lipopolysaccharide to the outer membrane of the cell. This is UDP-3-O-acylglucosamine N-acyltransferase from Bordetella petrii (strain ATCC BAA-461 / DSM 12804 / CCUG 43448).